Reading from the N-terminus, the 428-residue chain is MAGRRDRIQQLRGSRIAIAIFVGILIGCVCSVLFPNGFFNSGSSLIANEERISKSTSTDGLASCESSERVKMLKSDFSIISVKNAELRKQVRELTEKVRLAEQETENARKQVLVLGSEIKAGPFGTVKSLRTNPTVVPDESVNPRLAKLLEKVAVNKEIIVVLANSNVKPMLELQIASVKRVGIQNYLIVALDDSMESFCESKEVVFYKRDPDKAVDMVGKSGGNHAVSGLKFRVLREFLQLGYSVLLSDVDIVFLQNPFSHLHRDSDVESMSDGHDNNTAYGFNDVFDEPSMGWARYAHTMRIWVFNSGFFYLRPTIPSIDLLDRVADTLSKSEAWDQAVFNEQLFYPSHPGYTGLHASKRVMDMYEFMNSKVLFKTVRKNQELKKLKPVIVHLNYHPDKLERMHAVVEFYVNGKQDALDSFPDGSD.

Residues 1 to 15 (MAGRRDRIQQLRGSR) are Cytoplasmic-facing. The chain crosses the membrane as a helical; Signal-anchor for type II membrane protein span at residues 16–36 (IAIAIFVGILIGCVCSVLFPN). Residues 37-428 (GFFNSGSSLI…ALDSFPDGSD (392 aa)) lie on the Lumenal side of the membrane. Positions 250–252 (DVD) match the DXD motif motif. N278 carries an N-linked (GlcNAc...) asparagine glycan.

This sequence belongs to the glycosyltransferase 77 family. Expressed in roots, rosette and cauline leaves, stems, flowers and siliques.

Its subcellular location is the golgi apparatus membrane. In terms of biological role, plays a role in the arabinosylation of cell wall components. Involved in the arabinosylation of extensin proteins in root hair cells. Extensins are structural glycoproteins present in cell walls and its arabinosylation is important for root hair cell development. In Arabidopsis thaliana (Mouse-ear cress), this protein is Arabinosyltransferase RRA2.